The sequence spans 342 residues: Holliday junction branch migration complex subunit RuvB (342 aa).

The segment at 1–179 (MTNILSPEKS…FGIPMRLNFY (179 aa)) is large ATPase domain (RuvB-L). Residues Ile18, Arg19, Gly60, Lys63, Thr64, Thr65, 126-128 (EDF), Arg169, Tyr179, and Arg216 contribute to the ATP site. Thr64 contacts Mg(2+). The interval 180–250 (NTEELKQVLN…ICDFGLKRLT (71 aa)) is small ATPAse domain (RuvB-S). The head domain (RuvB-H) stretch occupies residues 253-342 (SIGLDSNDYR…NQLNILNENE (90 aa)). DNA is bound by residues Arg289, Arg308, and Arg313.

Belongs to the RuvB family. As to quaternary structure, homohexamer. Forms an RuvA(8)-RuvB(12)-Holliday junction (HJ) complex. HJ DNA is sandwiched between 2 RuvA tetramers; dsDNA enters through RuvA and exits via RuvB. An RuvB hexamer assembles on each DNA strand where it exits the tetramer. Each RuvB hexamer is contacted by two RuvA subunits (via domain III) on 2 adjacent RuvB subunits; this complex drives branch migration. In the full resolvosome a probable DNA-RuvA(4)-RuvB(12)-RuvC(2) complex forms which resolves the HJ.

The protein resides in the cytoplasm. It catalyses the reaction ATP + H2O = ADP + phosphate + H(+). In terms of biological role, participates in UV-tolerance of Synechocystis PCC 6803. Functionally, the RuvA-RuvB-RuvC complex processes Holliday junction (HJ) DNA during genetic recombination and DNA repair, while the RuvA-RuvB complex plays an important role in the rescue of blocked DNA replication forks via replication fork reversal (RFR). RuvA specifically binds to HJ cruciform DNA, conferring on it an open structure. The RuvB hexamer acts as an ATP-dependent pump, pulling dsDNA into and through the RuvAB complex. RuvB forms 2 homohexamers on either side of HJ DNA bound by 1 or 2 RuvA tetramers; 4 subunits per hexamer contact DNA at a time. Coordinated motions by a converter formed by DNA-disengaged RuvB subunits stimulates ATP hydrolysis and nucleotide exchange. Immobilization of the converter enables RuvB to convert the ATP-contained energy into a lever motion, pulling 2 nucleotides of DNA out of the RuvA tetramer per ATP hydrolyzed, thus driving DNA branch migration. The RuvB motors rotate together with the DNA substrate, which together with the progressing nucleotide cycle form the mechanistic basis for DNA recombination by continuous HJ branch migration. Branch migration allows RuvC to scan DNA until it finds its consensus sequence, where it cleaves and resolves cruciform DNA. The sequence is that of Holliday junction branch migration complex subunit RuvB from Rickettsia prowazekii (strain Madrid E).